A 943-amino-acid polypeptide reads, in one-letter code: Centromere protein C (943 aa).

Residue Lys45 forms a Glycyl lysine isopeptide (Lys-Gly) (interchain with G-Cter in SUMO2) linkage. The interval 70 to 91 (CIQSPSKECQKSHPKSVPVSSK) is disordered. 2 positions are modified to phosphoserine: Ser73 and Ser96. Lys119 is covalently cross-linked (Glycyl lysine isopeptide (Lys-Gly) (interchain with G-Cter in SUMO2)). Thr130 bears the Phosphothreonine mark. Lys134 participates in a covalent cross-link: Glycyl lysine isopeptide (Lys-Gly) (interchain with G-Cter in SUMO2). Ser146 carries the post-translational modification Phosphoserine. Lys180 participates in a covalent cross-link: Glycyl lysine isopeptide (Lys-Gly) (interchain with G-Cter in SUMO2). Thr183 bears the Phosphothreonine mark. Ser189 is subject to Phosphoserine. Residues Lys212 and Lys217 each participate in a glycyl lysine isopeptide (Lys-Gly) (interchain with G-Cter in SUMO2) cross-link. Positions 224 to 239 (VSDEEDKTSEGQERKP) are enriched in basic and acidic residues. Residues 224–250 (VSDEEDKTSEGQERKPSGSSQNRIRDS) are disordered. Ser225 carries the post-translational modification Phosphoserine. Residues Lys238 and Lys260 each participate in a glycyl lysine isopeptide (Lys-Gly) (interchain with G-Cter in SUMO2) cross-link. The Nuclear localization signal motif lies at 259 to 273 (KKSFSTLFLETVKRK). A Phosphoserine modification is found at Ser261. Residues Lys271, Lys273, and Lys297 each participate in a glycyl lysine isopeptide (Lys-Gly) (interchain with G-Cter in SUMO2) cross-link. Phosphoserine occurs at positions 316, 333, 376, and 397. The segment at 358-377 (LANDKHSHKPHPVETSQPSD) is disordered. The disordered stretch occupies residues 403-513 (YSKNAEKPSR…SKNKLVPEEV (111 aa)). Residues 412–426 (RSKRTIKQKQRRKFM) are compositionally biased toward basic residues. 2 stretches are compositionally biased toward basic and acidic residues: residues 438–463 (QSKD…RNME) and 488–510 (TRKD…KLVP). Ser439 is modified (phosphoserine). A Glycyl lysine isopeptide (Lys-Gly) (interchain with G-Cter in SUMO2) cross-link involves residue Lys440. The Nuclear localization signal signature appears at 484-499 (KKSSTRKDKEESKKKR). The residue at position 528 (Ser528) is a Phosphoserine. Lys534 participates in a covalent cross-link: Glycyl lysine isopeptide (Lys-Gly) (interchain with G-Cter in SUMO2). Disordered regions lie at residues 537 to 587 (ESPV…ATKG) and 632 to 717 (DCSR…KQSK). Ser538 is subject to Phosphoserine. A Nuclear localization signal motif is present at residues 558-574 (RKSTKKTNQSSKNIRKK). Residues 570-583 (NIRKKTIPLKRQKT) are compositionally biased toward basic residues. The segment covering 633–672 (CSRSTRSSKNEDNIMTAQNVPLKPQTSGYTCNIPTESNLD) has biased composition (polar residues). Lys677 is covalently cross-linked (Glycyl lysine isopeptide (Lys-Gly) (interchain with G-Cter in SUMO2)). A phosphoserine mark is found at Ser684, Ser709, and Ser710. Over residues 706–715 (VHGSSDDSKQ) the composition is skewed to basic and acidic residues. A Glycyl lysine isopeptide (Lys-Gly) (interchain with G-Cter in SUMO2) cross-link involves residue Lys727. Position 734 is a phosphothreonine (Thr734). The interval 737–759 (VRRTKRTRLKPLEYWRGERIDYQ) is MIF2 homology domain II. 2 positions are modified to phosphoserine: Ser763 and Ser773. A Nuclear localization signal motif is present at residues 780-798 (KRKAKENIGKVNKKSNKKR). Residue Lys807 forms a Glycyl lysine isopeptide (Lys-Gly) (interchain with G-Cter in SUMO2) linkage. An MIF2 homology domain III region spans residues 890–943 (LVFYVNFGDLLCTLHETPYILSTGDSFYVPSGNYYNIKNLRNEESVLLFTQIKR).

It belongs to the CENP-C/MIF2 family. Oligomer. Component of the CENPA-NAC complex, at least composed of CENPA, CENPC, CENPH, CENPM, CENPN, CENPT and CENPU. The CENPA-NAC complex interacts with the CENPA-CAD complex, composed of CENPI, CENPK, CENPL, CENPO, CENPP, CENPQ, CENPR and CENPS. Binds to DAXX. Interacts with DNMT3B. Interacts directly with CENPA. Identified in a centromere complex containing histones H2A, H2B and H4, and at least CENPA, CENPB, CENPC, CENPT, CENPN, HJURP, SUPT16H, SSRP1 and RSF1. Interacts with MEIKIN.

The protein resides in the nucleus. The protein localises to the chromosome. It is found in the centromere. Its subcellular location is the kinetochore. Its function is as follows. Component of the CENPA-NAC (nucleosome-associated) complex, a complex that plays a central role in assembly of kinetochore proteins, mitotic progression and chromosome segregation. The CENPA-NAC complex recruits the CENPA-CAD (nucleosome distal) complex and may be involved in incorporation of newly synthesized CENPA into centromeres. CENPC recruits DNA methylation and DNMT3B to both centromeric and pericentromeric satellite repeats and regulates the histone code in these regions. The protein is Centromere protein C (CENPC) of Homo sapiens (Human).